Reading from the N-terminus, the 391-residue chain is Ferrochelatase (391 aa).

Fe cation contacts are provided by H196 and E281.

The protein belongs to the ferrochelatase family.

The protein localises to the cytoplasm. It carries out the reaction heme b + 2 H(+) = protoporphyrin IX + Fe(2+). The protein operates within porphyrin-containing compound metabolism; protoheme biosynthesis; protoheme from protoporphyrin-IX: step 1/1. In terms of biological role, catalyzes the ferrous insertion into protoporphyrin IX. The sequence is that of Ferrochelatase from Prochlorococcus marinus (strain MIT 9215).